The following is a 1700-amino-acid chain: MKLRNPKAPIRNDRKAQRSFHKMLSLKAQAKLALTIQDRLELGLLSNNFIRKKLQFVDGYCYLKFLRCAERKTAARNLGSDPSLGLMKRKLVPSQYHSWQSNYTLLVTKSSKLTFAHVNRALGGQKLAEVPANCCIGSTICPFLSVPGDHSSYLVNQLPYMNGYCYLKLIRRTCRFNAVVTLGPWPLATDFFDYIIHRNLNKDLGLFKCNLENTINGSFCHIVEADPGSQNCIFPLPQDCRIGGSISEVVKTLGPDKEMIERDAVTEIKKEIAIVRKYNPYHHSSKQQSALESYGIGSDPYAVRSHTHAAEKAIENKLLDIVGMNLRRRSVITMLWQKRNKAHLMGRSNCKDVYVNTIMEAKDLVRYDQFSFGLPSVATSTAFIGDALHHMTPESVFDLFERSPNLMVLHATIVIPPETLLKCRSSNPELYSLRYYDDKFVYIPEGHAGGSYVHEVKNSNWLAISHIQRGGKFLTVKRLETLAAHHYFVIVKGKVETDSIRVFQSPSQVELLDIFADRQSNVRCSLDHAFAIKMERYVHSLKRLELADVTAKTRQLLSSEELLQYSPTDLVKIDNYFYFLAHTSRFNSSEELIGSGFFESLVSPLKQWFSEICEKFLGKSNFHKTLEALEWKVINYDVKTVIYDMSKPWEKLHWKSENNLLSFDLDSNDNPTSLVDNTDCEASYSESTKFDYELVQVEDDFIDIRIPGIDIPIYDSEYLASEEPVEVEESPIPEVLPEIEDNLSDSMSIDGWMSQSLKTFLPEHDDKVLSILEKFGVSKYGQVVGKNLILPITDFKSVQFEKIGQDEFTESLQDRGFGFVSYTPDAERVAVAATDLEHGQGVLITSDEAGELFKKAMPMSVYTCVILGAGGAGKTTFVEKFVKDNPKSFTVVTPLSVLKKEWQRKGAKNVFTYETALKRSLKKPANEYVILDDFTRFPAGWIELYMSLNTKSKYIVIGDSRQADSHSMSGAFANALVPAIDLFAPLSPFYLNWTWRMTRPVANALGHVSWKLPESGKPILSVSSEVPKDCVVLAPSTTLKVGVETVNDKAFTYTSAQGATFDKVAILIDDNITRVCGDKAVYTALSRSKGEIVFVSTVTGPDTFEKVKCTPFLRTFVELVREYELNQPKVREPEEDFVDDVTPVTSQPKVSEEFLIEELNKNSVEKFDREIFRADLGHTDAVKEIGRVTEQIPRQQRSDEALNLVTLDKRVHHATVEENLDELARKKALGNILWTNFKEQYYSGLESVMVDQDLLVSCRAEITKTYLSKTEALLKGGQLRQSPDFDKFKIADFLKTQWVRKTEKYGLPIKAGQTVTSFMQETVMATGTLSRYMRRMFDKLCTNPNVYLHREKTEQDFSTWVKNGWNFSGHATINDCEAFDASQDGAFVEFERLHAEFLGVPRELIDFYVDTKIKSYIWRGTISVMRLSGEGPTYDFNTWANMAFMATKYSIPSVAMTAYSGDDFACDQVLSVKPAFKELECRFKLKEKRFLKSQGRGSYADFCGMIITPNGVIKNPRKLYLSLKSHDEIGTIDKAIVNYYNDLRTLISLGDNIFSALDATETEFFAGCLNVVHDYILRGSNYEGHQNLTLFKKPRTIKWRVERDETRDCLIHMIIQDRKFIRNLLEGVEQTCDNKPNSNLIFRGMTNGYQKRAKFNQLLNRQDEYLDKVLHKSAGQNALRRLTATLDDTQDSTVAEQSAV.

An Alphavirus-like MT domain is found at 299 to 462 (DPYAVRSHTH…VHEVKNSNWL (164 aa)). The (+)RNA virus helicase ATP-binding domain occupies 842 to 991 (VLITSDEAGE…LFAPLSPFYL (150 aa)). Residue 868–875 (GAGGAGKT) participates in ATP binding. A (+)RNA virus helicase C-terminal domain is found at 992 to 1128 (NWTWRMTRPV…LVREYELNQP (137 aa)). Positions 1369 to 1480 (GHATINDCEA…SVKPAFKELE (112 aa)) constitute a RdRp catalytic domain.

The protein belongs to the potexvirus/carlavirus RNA replication protein family.

It catalyses the reaction RNA(n) + a ribonucleoside 5'-triphosphate = RNA(n+1) + diphosphate. The catalysed reaction is ATP + H2O = ADP + phosphate + H(+). In terms of biological role, RNA replication. The protein possibly functions as an ATP-binding helicase. The sequence is that of RNA replication protein from Sclerotinia sclerotiorum (White mold).